Here is a 542-residue protein sequence, read N- to C-terminus: Chaperonin GroEL (542 aa).

ATP contacts are provided by residues 29-32, 86-90, glycine 413, 476-478, and aspartate 492; these read TLGP, DGTTT, and NAA. Positions 523–542 are disordered; the sequence is EPAAPAMPGGMDPSMMGGMM. Positions 526 to 542 are enriched in low complexity; sequence APAMPGGMDPSMMGGMM.

Belongs to the chaperonin (HSP60) family. In terms of assembly, forms a cylinder of 14 subunits composed of two heptameric rings stacked back-to-back. Interacts with the co-chaperonin GroES.

Its subcellular location is the cytoplasm. It catalyses the reaction ATP + H2O + a folded polypeptide = ADP + phosphate + an unfolded polypeptide.. Together with its co-chaperonin GroES, plays an essential role in assisting protein folding. The GroEL-GroES system forms a nano-cage that allows encapsulation of the non-native substrate proteins and provides a physical environment optimized to promote and accelerate protein folding. This is Chaperonin GroEL from Streptococcus uberis (strain ATCC BAA-854 / 0140J).